Reading from the N-terminus, the 347-residue chain is Histidinol-phosphate aminotransferase (347 aa).

Position 209 is an N6-(pyridoxal phosphate)lysine (lysine 209).

The protein belongs to the class-II pyridoxal-phosphate-dependent aminotransferase family. Histidinol-phosphate aminotransferase subfamily. As to quaternary structure, homodimer. The cofactor is pyridoxal 5'-phosphate.

The enzyme catalyses L-histidinol phosphate + 2-oxoglutarate = 3-(imidazol-4-yl)-2-oxopropyl phosphate + L-glutamate. It functions in the pathway amino-acid biosynthesis; L-histidine biosynthesis; L-histidine from 5-phospho-alpha-D-ribose 1-diphosphate: step 7/9. This is Histidinol-phosphate aminotransferase from Geotalea daltonii (strain DSM 22248 / JCM 15807 / FRC-32) (Geobacter daltonii).